The sequence spans 101 residues: Small ribosomal subunit protein uS14 (101 aa).

It belongs to the universal ribosomal protein uS14 family. As to quaternary structure, part of the 30S ribosomal subunit. Contacts proteins S3 and S10.

Functionally, binds 16S rRNA, required for the assembly of 30S particles and may also be responsible for determining the conformation of the 16S rRNA at the A site. This Brucella abortus (strain 2308) protein is Small ribosomal subunit protein uS14.